We begin with the raw amino-acid sequence, 426 residues long: Histidine--tRNA ligase (426 aa).

Belongs to the class-II aminoacyl-tRNA synthetase family. As to quaternary structure, homodimer.

The protein localises to the cytoplasm. The catalysed reaction is tRNA(His) + L-histidine + ATP = L-histidyl-tRNA(His) + AMP + diphosphate + H(+). The polypeptide is Histidine--tRNA ligase (Streptococcus pyogenes serotype M49 (strain NZ131)).